We begin with the raw amino-acid sequence, 3926 residues long: Protein bassoon (3926 aa).

The tract at residues 1–161 (MGNEVSLEGG…PTSPYSVPQI (161 aa)) is disordered. Gly-2 carries N-myristoyl glycine lipidation. Pro residues-rich tracts occupy residues 15–30 (PLPP…PGPG) and 58–72 (PPVP…PGPG). The tract at residues 23–32 (PGPGPGPGPG) is 5 X 2 AA tandem repeats of P-G. A 7 X 2 AA tandem repeats of P-G region spans residues 61 to 74 (PGPGPGPGPGPGPG). Composition is skewed to polar residues over residues 90–105 (RAAS…TTPG) and 130–157 (QVDS…SPYS). Phosphoserine is present on Ser-145. Arg-148 is modified (omega-N-methylarginine). 2 C4-type zinc fingers span residues 170-193 (CPIC…CTQC) and 198-220 (CNQC…CLNC). Disordered stretches follow at residues 231-343 (TTAP…EQTQ) and 366-459 (SVQP…KTMP). Polar residues predominate over residues 233-243 (APRSKSQQQLH). Phosphoserine occurs at positions 244 and 248. A compositionally biased stretch (polar residues) spans 366–377 (SVQPEADTQGQP). 2 consecutive C4-type zinc fingers follow at residues 465-488 (CPLC…CTTC) and 493-515 (CNLC…CLNC). Disordered regions lie at residues 524 to 927 (SLGE…LQGG) and 940 to 1248 (GSYG…AEGT). The segment covering 552-569 (PLKQKGPQGLGQPSGPLP) has biased composition (low complexity). Repeat copies occupy residues 571 to 577 (KASPLST), 578 to 584 (KASPLPS), and 585 to 591 (KASPQAK). The interval 571–591 (KASPLSTKASPLPSKASPQAK) is 3 X 7 AA tandem repeats of K-A-S-P-[LQ]-[APS]-[KST]. Residues 619-631 (MPKPPPETTPTPA) show a composition bias toward pro residues. The segment covering 671 to 680 (QDASRSPQSL) has biased composition (polar residues). Residues 681 to 698 (SDTGYSSDGISSSQSEIT) show a composition bias toward low complexity. The segment covering 771 to 787 (FDSDEELEDILEEDEDS) has biased composition (acidic residues). Residues 788–797 (AEWRRRREQQ) are compositionally biased toward basic and acidic residues. The span at 851 to 862 (SAEEDNLEEDDT) shows a compositional bias: acidic residues. Residue Arg-867 is modified to Omega-N-methylarginine. A Phosphoserine modification is found at Ser-970. Residues 984–1001 (PASTPSYTSGTSPTSLSS) are compositionally biased toward low complexity. Positions 1037–1092 (IEDSSEEEELREEEELLREQEKMREVEQQRIRSTARKTRRDKEELRAQRRRERSKT) form a coiled coil. Over residues 1039–1052 (DSSEEEELREEEEL) the composition is skewed to acidic residues. Phosphoserine is present on residues Ser-1040 and Ser-1041. Residues 1053–1066 (LREQEKMREVEQQR) are compositionally biased toward basic and acidic residues. At Ser-1090 the chain carries Phosphoserine. Thr-1092 carries the post-translational modification Phosphothreonine. A phosphoserine mark is found at Ser-1098 and Ser-1104. Positions 1107–1122 (EELRQAAEMEELHRSS) are enriched in basic and acidic residues. Composition is skewed to low complexity over residues 1123 to 1133 (CSEYSPSPSLD) and 1163 to 1180 (SPTE…SGRP). Residues 1181–1208 (LKSAEEAYEEMMRKAELLQRQQGQAAGA) are a coiled coil. The segment covering 1182 to 1197 (KSAEEAYEEMMRKAEL) has biased composition (basic and acidic residues). Over residues 1199-1209 (QRQQGQAAGAR) the composition is skewed to low complexity. Ser-1226 carries the phosphoserine modification. Positions 1276–1294 (RDLAFAEDKKKEKQFLNAE) form a coiled coil. Disordered regions lie at residues 1298–1547 (MDPM…RLVW) and 1570–1620 (RMVH…RVPS). Over residues 1322-1332 (SFSTPTSSDSS) the composition is skewed to low complexity. Residue Thr-1343 is glycosylated (O-linked (GlcNAc) threonine). Over residues 1346–1355 (FAKETQDPLK) the composition is skewed to basic and acidic residues. Low complexity-rich tracts occupy residues 1358–1367 (SSPASPSSAS) and 1377–1392 (GPGT…CPAG). O-linked (GlcNAc) threonine glycosylation is present at Thr-1384. A compositionally biased stretch (polar residues) spans 1408–1434 (RSPSPSSTAHSYGHSPTTANYGSQTED). Low complexity predominate over residues 1466 to 1493 (PSRAYSYFASSSPPLSPSSPSESPTFSP). Residues Ser-1477, Ser-1486, and Ser-1488 each carry the phosphoserine modification. Residues 1570–1598 (RMVHASASTSPLCSPTETQPTTHGYSQTT) are compositionally biased toward polar residues. Residues 1606-1616 (PPEPPGPPGFP) show a composition bias toward pro residues. 2 positions are modified to omega-N-methylarginine: Arg-1787 and Arg-1791. Arg-1801 is modified (asymmetric dimethylarginine; alternate). Arg-1801 bears the Omega-N-methylarginine; alternate mark. An Omega-N-methylarginine modification is found at Arg-1813. Positions 1924-1978 (PEKSMADAAPPGQSSSPFYGPRDPEPPEPPTYRAQGVVGPGPHEEQRPYPQGLPG) are disordered. Residues Ser-1985 and Ser-2041 each carry the phosphoserine modification. An omega-N-methylarginine mark is found at Arg-2046 and Arg-2076. An asymmetric dimethylarginine mark is found at Arg-2250, Arg-2260, and Arg-2266. The interval 2287–2309 (AAKAPGAGGPSRPEMPVGAAREE) is disordered. O-linked (GlcNAc) threonine glycosylation occurs at Thr-2314. A compositionally biased stretch (low complexity) spans 2324–2341 (GAPAPAPLAGQKPPADAA). 2 disordered regions span residues 2324–2370 (GAPA…KQQE) and 2532–2568 (PSSA…ACEL). The stretch at 2351 to 2476 (RPGFEKEEAS…EEQKQRQKAP (126 aa)) forms a coiled coil. The segment covering 2353–2370 (GFEKEEASQEERQRKQQE) has biased composition (basic and acidic residues). Residues 2533 to 2543 (SSASDMSLQTE) show a composition bias toward polar residues. Residue Ser-2570 is modified to Phosphoserine. Residues Thr-2587 and Thr-2614 each carry the phosphothreonine modification. Residues 2601-2655 (RRRARRSADCSVQTDDEDSAEWEQPVRRRRSRLPRHSDSGSDSKHDATASSSSAA) form a disordered region. Residues 2635–2647 (RHSDSGSDSKHDA) are compositionally biased toward basic and acidic residues. Residue Thr-2691 is glycosylated (O-linked (GlcNAc) threonine). An interaction with DAO region spans residues 2721-3268 (EPDGQAQGVA…PGSSGRPGKE (548 aa)). Phosphoserine occurs at positions 2802, 2851, and 2857. The segment at 2845–2865 (TLQRSLSDPKPLSPTAEESAK) is disordered. A glycan (O-linked (GlcNAc) threonine) is linked at Thr-2936. Positions 2939-2981 (SLLRELDRDLRLVEHESTKLRKKQAELDEEEKEIDAKLKYLEL) form a coiled coil. Residue Ser-3013 is modified to Phosphoserine. Low complexity predominate over residues 3039–3055 (AAAPATPSGPTAFQQPR). 3 disordered regions span residues 3039-3375 (AAAP…FSPI), 3424-3551 (GMSS…PRAH), and 3572-3897 (EAYH…SVFS). Positions 3083 to 3095 (YPGPSTYPAPAFP) are enriched in pro residues. Over residues 3165–3176 (ASPVVPMSSAPS) the composition is skewed to low complexity. The span at 3205-3228 (SVSQSPAPTYPSDSHYTSLEQNVP) shows a compositional bias: polar residues. At Ser-3291 the chain carries Phosphoserine. Composition is skewed to basic and acidic residues over residues 3321–3333 (GDSD…RVEK), 3363–3375 (QGME…FSPI), and 3465–3477 (GYER…ERLQ). Phosphoserine is present on Ser-3373. Arg-3492 carries the post-translational modification Omega-N-methylarginine. Basic and acidic residues-rich tracts occupy residues 3540–3551 (VQEHVKDGPRAH), 3583–3593 (WFDKPRDARSD), 3628–3647 (LWPH…EHRH), and 3657–3681 (HTGE…EARP). Positions 3703 to 3712 (AEYSQPSRAS) are enriched in polar residues. A compositionally biased stretch (low complexity) spans 3741 to 3807 (PQAQPQLQGR…RLQQQSQPTT (67 aa)). Residue Arg-3808 is modified to Omega-N-methylarginine. Composition is skewed to low complexity over residues 3849–3860 (AKAPQQGRAPQA) and 3882–3892 (GAPAGQPGADG).

As to quaternary structure, interacts with PCLO, ERC2/CAST1, RIMS1 and UNC13A. Interacts with TPRG1L. Interacts with DYNLL1 and DYNLL2; these interactions potentially link PTVs to dynein and myosin V motor complexes. Interacts with ATG5; this interaction is important for the regulation of presynaptic autophagy. Interacts (via C-terminus) with TRIO (via N-terminus). Interacts with CTBP1. Interacts with SIAH1; this interaction negatively regulates SIAH1 E3 ligase activity. Interacts (via coiled region) with DAO; the interaction is direct. Myristoylated. The N-terminal myristoylation is not sufficient for presynaptic localization. As to expression, exclusively expressed in brain.

Its subcellular location is the cytoplasm. The protein resides in the presynaptic active zone. It is found in the cytoskeleton. It localises to the cytoplasmic vesicle. The protein localises to the secretory vesicle. Its subcellular location is the synaptic vesicle membrane. Functionally, scaffold protein of the presynaptic cytomatrix at the active zone (CAZ) which is the place in the synapse where neurotransmitter is released. After synthesis, participates in the formation of Golgi-derived membranous organelles termed Piccolo-Bassoon transport vesicles (PTVs) that are transported along axons to sites of nascent synaptic contacts. At the presynaptic active zone, regulates the spatial organization of synaptic vesicle cluster, the protein complexes that execute membrane fusion and compensatory endocytosis. Also functions in processes other than assembly such as the regulation of specific presynaptic protein ubiquitination by interacting with SIAH1 or the regulation of presynaptic autophagy by associating with ATG5. Also mediates synapse to nucleus communication leading to reconfiguration of gene expression by associating with the transcriptional corepressor CTBP1 and by subsequently reducing the size of its pool available for nuclear import. Inhibits the activity of the proportion of DAO enzyme that localizes to the presynaptic active zone, which may modulate synaptic transmission. The polypeptide is Protein bassoon (Homo sapiens (Human)).